We begin with the raw amino-acid sequence, 547 residues long: Probable bifunctional tRNA threonylcarbamoyladenosine biosynthesis protein (547 aa).

Residues 1–329 are kae1; that stretch reads MKNTFILGIE…FRTDDVNVTW (329 aa). Fe cation-binding residues include His-113, His-117, and Tyr-134. L-threonylcarbamoyladenylate contacts are provided by residues 134-138, Asp-166, Gly-179, Glu-183, and Asn-262; that span reads YVSGA. Residue Asp-290 participates in Fe cation binding. The Protein kinase domain occupies 340–547; that stretch reads EISPEAFLRA…EEIKKRARYA (208 aa). ATP contacts are provided by residues 355–363 and Lys-377; that span reads LDNGAEAVI. Asp-464 (proton acceptor; for kinase activity) is an active-site residue.

In the N-terminal section; belongs to the KAE1 / TsaD family. The protein in the C-terminal section; belongs to the protein kinase superfamily. Tyr protein kinase family. BUD32 subfamily. Component of the KEOPS complex that consists of Kae1, Bud32, Cgi121 and Pcc1; the whole complex dimerizes. Requires Fe(2+) as cofactor.

The protein resides in the cytoplasm. The catalysed reaction is L-seryl-[protein] + ATP = O-phospho-L-seryl-[protein] + ADP + H(+). It catalyses the reaction L-threonyl-[protein] + ATP = O-phospho-L-threonyl-[protein] + ADP + H(+). It carries out the reaction L-threonylcarbamoyladenylate + adenosine(37) in tRNA = N(6)-L-threonylcarbamoyladenosine(37) in tRNA + AMP + H(+). Functionally, required for the formation of a threonylcarbamoyl group on adenosine at position 37 (t(6)A37) in tRNAs that read codons beginning with adenine. Is a component of the KEOPS complex that is probably involved in the transfer of the threonylcarbamoyl moiety of threonylcarbamoyl-AMP (TC-AMP) to the N6 group of A37. The Kae1 domain likely plays a direct catalytic role in this reaction. The Bud32 domain probably displays kinase activity that regulates Kae1 function. The protein is Probable bifunctional tRNA threonylcarbamoyladenosine biosynthesis protein of Methanosarcina acetivorans (strain ATCC 35395 / DSM 2834 / JCM 12185 / C2A).